The sequence spans 206 residues: MAVYKNLSPEQTVLLQQGRVAGVDEVGRGPLVGDVVTAAVILDPNKPIAGLNDSKKLTEKKRDALYLEIMDKALAVSVGRASPTEIDELNILHATMLAMQRAVAGLTIVPESVLVDGNRTPDFGVPAHAVVKGDGLIAAISAASVIAKVTRDREMGELDARYPQYGFAGHKGYPTKAHFEAISAHGVLAEHRRSFRPVREWLEANS.

In terms of domain architecture, RNase H type-2 spans 18 to 206 (GRVAGVDEVG…PVREWLEANS (189 aa)). 3 residues coordinate a divalent metal cation: Asp24, Glu25, and Asp116.

This sequence belongs to the RNase HII family. Requires Mn(2+) as cofactor. Mg(2+) serves as cofactor.

The protein localises to the cytoplasm. The enzyme catalyses Endonucleolytic cleavage to 5'-phosphomonoester.. Endonuclease that specifically degrades the RNA of RNA-DNA hybrids. The sequence is that of Ribonuclease HII from Shewanella amazonensis (strain ATCC BAA-1098 / SB2B).